The chain runs to 266 residues: Ribosome-recycling factor, chloroplastic (266 aa).

The segment covering 1–26 (MPPLHAVSPAAAAAPPRALSSAARVP) has biased composition (low complexity). The segment at 1 to 30 (MPPLHAVSPAAAAAPPRALSSAARVPQRPG) is disordered. The transit peptide at 1–74 (MPPLHAVSPA…SDKRAVLRHA (74 aa)) directs the protein to the chloroplast. Coiled-coil stretches lie at residues 75 to 109 (TIEE…NTVR) and 207 to 266 (VAIR…LMKI).

This sequence belongs to the RRF family.

The protein resides in the plastid. Its subcellular location is the chloroplast. Its function is as follows. Responsible for the release of ribosomes from messenger RNA at the termination of chloroplastic protein biosynthesis. The protein is Ribosome-recycling factor, chloroplastic of Oryza sativa subsp. indica (Rice).